The chain runs to 547 residues: Chaperonin GroEL (547 aa).

ATP-binding positions include 30–33 (TLGP), lysine 51, 87–91 (DGTTT), glycine 415, and aspartate 495.

The protein belongs to the chaperonin (HSP60) family. Forms a cylinder of 14 subunits composed of two heptameric rings stacked back-to-back. Interacts with the co-chaperonin GroES.

It is found in the cytoplasm. The catalysed reaction is ATP + H2O + a folded polypeptide = ADP + phosphate + an unfolded polypeptide.. Its function is as follows. Together with its co-chaperonin GroES, plays an essential role in assisting protein folding. The GroEL-GroES system forms a nano-cage that allows encapsulation of the non-native substrate proteins and provides a physical environment optimized to promote and accelerate protein folding. The polypeptide is Chaperonin GroEL (Bartonella quintana (strain Toulouse) (Rochalimaea quintana)).